Reading from the N-terminus, the 259-residue chain is Thiazole synthase (259 aa).

Catalysis depends on lysine 99, which acts as the Schiff-base intermediate with DXP. Residues glycine 160, 186 to 187 (AG), and 208 to 209 (NT) each bind 1-deoxy-D-xylulose 5-phosphate.

The protein belongs to the ThiG family. As to quaternary structure, homotetramer. Forms heterodimers with either ThiH or ThiS.

It is found in the cytoplasm. The catalysed reaction is [ThiS sulfur-carrier protein]-C-terminal-Gly-aminoethanethioate + 2-iminoacetate + 1-deoxy-D-xylulose 5-phosphate = [ThiS sulfur-carrier protein]-C-terminal Gly-Gly + 2-[(2R,5Z)-2-carboxy-4-methylthiazol-5(2H)-ylidene]ethyl phosphate + 2 H2O + H(+). It functions in the pathway cofactor biosynthesis; thiamine diphosphate biosynthesis. Its function is as follows. Catalyzes the rearrangement of 1-deoxy-D-xylulose 5-phosphate (DXP) to produce the thiazole phosphate moiety of thiamine. Sulfur is provided by the thiocarboxylate moiety of the carrier protein ThiS. In vitro, sulfur can be provided by H(2)S. This Porphyromonas gingivalis (strain ATCC 33277 / DSM 20709 / CIP 103683 / JCM 12257 / NCTC 11834 / 2561) protein is Thiazole synthase.